A 1850-amino-acid polypeptide reads, in one-letter code: Vitellogenin-2 (1850 aa).

A signal peptide spans 1-15; sequence MRGIILALVLTLVGS. The Vitellogenin domain maps to 24–662; that stretch reads FNSRRSYLYN…SPRTMFPSAI (639 aa). Residue Asn-604 is glycosylated (N-linked (GlcNAc...) asparagine). The interval 935–984 is disordered; sequence DAPLDVTEEPFQTSERASREHFAMQGPDSMPRKQSHSSREDLRRSTGKRA. Asn-1094 is a glycosylation site (N-linked (GlcNAc...) asparagine). Disordered regions lie at residues 1115 to 1313 and 1338 to 1362; these read GTEP…SSSS and EFPKRKLPGDRATSRYSSTRSSHDT. Low complexity predominate over residues 1122 to 1143; sequence TSSSSSSASSTATSSSSSSASS. Over residues 1156-1165 the composition is skewed to basic and acidic residues; the sequence is DQVKQARNKD. Residues 1167 to 1266 show a composition bias toward low complexity; sequence SSSSRSSKSS…SRSSSSSSKS (100 aa). 2 N-linked (GlcNAc...) asparagine glycosylation sites follow: Asn-1177 and Asn-1188. The span at 1267–1277 shows a compositional bias: basic residues; sequence SSHHSHSHHSG. The span at 1278–1291 shows a compositional bias: low complexity; sequence HLNGSSSSSSSSRS. A glycan (N-linked (GlcNAc...) asparagine) is linked at Asn-1280. The segment covering 1338–1350 has biased composition (basic and acidic residues); sequence EFPKRKLPGDRAT. N-linked (GlcNAc...) asparagine glycosylation is found at Asn-1417, Asn-1597, and Asn-1665. The region spanning 1579–1756 is the VWFD domain; sequence ARCSVSYNKI…SWILEEAPCR (178 aa). Disulfide bonds link Cys-1581-Cys-1719 and Cys-1604-Cys-1755.

In terms of processing, phosvitin, an egg yolk storage protein, is one of the most highly phosphorylated (10%) proteins in nature. Cathepsin D is responsible for intraoocytic processing of vitellogenin. Post-translationally, may contain intrachain disulfide bonds. In terms of tissue distribution, after incorporation from serum via a specific receptor, it is cleaved into four fragments, heavy and light chain lipovitellins, phosphovitin and YGP40, and YGP40 is released into the yolk plasma before or during compartmentation of lipovitellin-phosvitin complex into the yolk granule.

Functionally, precursor of the major egg-yolk proteins that are sources of nutrients during early development of oviparous organisms. Phosvitin is believed to be of importance in sequestering calcium, iron and other cations for the developing embryo. The protein is Vitellogenin-2 (VTG2) of Gallus gallus (Chicken).